The chain runs to 217 residues: MNLAAIAKNYSMHNGESGTIVPYVPPPYNFASAPTFSQRTSQMESVSLGILNQAMSSTTGASGALKDEKAAFGAMAEALRDPEPIRQIKKQVGIRTLKNLKMELATMRRKKSALKIMIFISGCVTLATSMVGGLSIVDDEILGDYKNNDWLMKTIHGLNLLCTTVLLAAGKISDKIQEEISRTKRDIAKRESYVSAASMSWNGDTEMSLQGIKYGES.

Belongs to the orbivirus NS3 family.

In terms of biological role, may play a role in the release of virions from infected cells. The polypeptide is Non-structural protein NS3 (Segment-10) (Camelus dromedarius (Dromedary)).